Here is a 1146-residue protein sequence, read N- to C-terminus: Ankyrin repeat domain-containing protein 24 (1146 aa).

ANK repeat units follow at residues Glu81–Ser110, Ala114–Val143, Ser147–Pro176, Ser180–Asp209, and Gln213–Ile242. Disordered stretches follow at residues Arg272 to Arg320, Arg607 to Ala627, and Glu766 to Thr785. Residues Glu286–Gly297 are compositionally biased toward polar residues. Positions Arg320 to Glu517 form a coiled coil. A coiled-coil region spans residues Ala714–Ala1110.

In terms of assembly, homodimer. Interacts (via C-terminal domain) with TRIOBP (via C-terminal domain) isoform 4; recruits TRIOBP isoform 4 to stereocilia rootlets.

The protein localises to the cell membrane. It is found in the cell projection. Its subcellular location is the stereocilium. Functionally, component of the stereocilia rootlet in hair cells of inner ear. Bridges the apical plasma membrane with the lower rootlet and maintains normal distribution of TRIOBP, thereby reinforcing stereocilia insertion points and organizing rootlets for hearing with long-term resilience. The polypeptide is Ankyrin repeat domain-containing protein 24 (Homo sapiens (Human)).